A 419-amino-acid chain; its full sequence is Creatine kinase S-type, mitochondrial (419 aa).

The transit peptide at methionine 1–alanine 39 directs the protein to the mitochondrion. The tract at residues glutamate 40–methionine 64 is cardiolipin-binding. Residues arginine 46–asparagine 132 form the Phosphagen kinase N-terminal domain. Positions tyrosine 159–leucine 401 constitute a Phosphagen kinase C-terminal domain. ATP is bound by residues serine 162 to arginine 166 and histidine 225. Tyrosine 255 is subject to Phosphotyrosine. ATP contacts are provided by residues arginine 270, arginine 326, arginine 354–valine 359, and aspartate 369. Threonine 356 bears the Phosphothreonine mark.

Belongs to the ATP:guanido phosphotransferase family. As to quaternary structure, exists as an octamer composed of four CKMT2 homodimers. Sarcomere-specific. Found only in heart and skeletal muscles.

The protein resides in the mitochondrion inner membrane. The catalysed reaction is creatine + ATP = N-phosphocreatine + ADP + H(+). Functionally, reversibly catalyzes the transfer of phosphate between ATP and various phosphogens (e.g. creatine phosphate). Creatine kinase isoenzymes play a central role in energy transduction in tissues with large, fluctuating energy demands, such as skeletal muscle, heart, brain and spermatozoa. The sequence is that of Creatine kinase S-type, mitochondrial (CKMT2) from Homo sapiens (Human).